The sequence spans 32 residues: Cytochrome b6-f complex subunit 7 (32 aa).

Residues 9–27 form a helical membrane-spanning segment; sequence AAVFWVLIPVGLAGGALLL.

This sequence belongs to the PetM family. In terms of assembly, the 4 large subunits of the cytochrome b6-f complex are cytochrome b6, subunit IV (17 kDa polypeptide, PetD), cytochrome f and the Rieske protein, while the 4 small subunits are PetG, PetL, PetM and PetN. The complex functions as a dimer.

It is found in the cellular thylakoid membrane. Component of the cytochrome b6-f complex, which mediates electron transfer between photosystem II (PSII) and photosystem I (PSI), cyclic electron flow around PSI, and state transitions. This is Cytochrome b6-f complex subunit 7 from Prochlorococcus marinus (strain MIT 9303).